Consider the following 577-residue polypeptide: Pentatricopeptide repeat-containing protein At2g01390 (577 aa).

10 PPR repeats span residues 121-155, 156-190, 191-225, 226-260, 261-295, 382-416, 417-451, 452-482, 485-519, and 520-554; these read DHFT…GVLI, DTVT…GCEP, TVVS…RVSP, NCHT…GVQP, DKAA…GVVL, DSFV…GIHL, KKSA…QHSL, GCYQ…LPDD, GVAA…EIMP, and SLGT…LVAS.

This sequence belongs to the PPR family. P subfamily.

The polypeptide is Pentatricopeptide repeat-containing protein At2g01390 (Arabidopsis thaliana (Mouse-ear cress)).